A 926-amino-acid polypeptide reads, in one-letter code: Ubiquitin carboxyl-terminal hydrolase 4 (926 aa).

The region spanning 205–328 (SQMEILLIDI…WLKSNYGRQV (124 aa)) is the Rhodanese domain. Serine 443 carries the post-translational modification Phosphoserine. One can recognise a USP domain in the interval 562 to 923 (VGLENLGNSC…NAYVLFYHRV (362 aa)). Cysteine 571 acts as the Nucleophile in catalysis. The active-site Proton acceptor is histidine 880.

Belongs to the peptidase C19 family. In terms of assembly, interacts with BRO1, RFU1 and VPS32. Associates with the 26S proteasome.

The protein resides in the cytoplasm. The protein localises to the late endosome membrane. The enzyme catalyses Thiol-dependent hydrolysis of ester, thioester, amide, peptide and isopeptide bonds formed by the C-terminal Gly of ubiquitin (a 76-residue protein attached to proteins as an intracellular targeting signal).. With respect to regulation, RFU1 is an inhibitor of deubiquitination activity. Functionally, ubiquitin thioesterase that acts at the late endosome/prevacuolar compartment to recover ubiquitin from ubiquitinated membrane proteins en route to the vacuole. Also removes ubiquitin from soluble proteins targeted to proteasomes. Is essential to maintain a normal level of free ubiquitin. Involved in the ammonium-induced down-regulation of the GAP1 permease and the UME3 destruction in response to oxidative stress. Has a role in the RAD9 checkpoint response to TOP1 poisons. Required for promoting coordination of DNA replication and avoids DNA overreplication. This Saccharomyces cerevisiae (strain RM11-1a) (Baker's yeast) protein is Ubiquitin carboxyl-terminal hydrolase 4 (DOA4).